The sequence spans 456 residues: MAAALKCLLTLGRWCPGLGVAPQARALAALVPGVTQVDNKSGFLQKRPHRQHPGILKLPHVRLPQALANGAQLLLLGSAGPTMENQVQTLTSYLWSRHLPVEPEELQRRARHLEKKFLENPDLSQTEEKLRGAVLHALRKTTYHWQELSYTEGLSLVYMAARLDGGFAAVSRAFHEIRARNPAFQPQTLMDFGSGTGSVTWAAHSIWGQSLREYMCVDRSAAMLVLAEKLLKGGSESGEPYIPGVFFRQFLPVSPKVQFDVVVSAFSLSELPSKADRTEVVQTLWRKTGHFLVLVENGTKAGHSLLMDARDLVLKGKEKSPLDPRPGFVFAPCPHELPCPQLTNLACSFSQAYHPIPFSWNKKPKEEKFSMVILARGSPEEAHRWPRITQPVLKRPRHVHCHLCCPDGHMQHAVLTARRHGRDLYRCARVSSWGDLLPVLTPSAFPPSTAQDPSES.

Residues 1–19 (MAAALKCLLTLGRWCPGLG) constitute a mitochondrion transit peptide. [4Fe-4S] cluster is bound by residues Cys-333, Cys-339, Cys-347, and Cys-404.

Belongs to the methyltransferase superfamily. Rsm22 family. In terms of assembly, associates with the mitochondrial ribosome (mitoribosome).

The protein resides in the mitochondrion matrix. Its function is as follows. Mitochondrial ribosome (mitoribosome) assembly factor. Binds at the interface of the head and body domains of the mitochondrial small ribosomal subunit (mt-SSU), occluding the mRNA channel and preventing compaction of the head domain towards the body. Probable inactive methyltransferase: retains the characteristic folding and ability to bind S-adenosyl-L-methionine, but it probably lost its methyltransferase activity. This Homo sapiens (Human) protein is Ribosome assembly protein METTL17, mitochondrial.